A 57-amino-acid polypeptide reads, in one-letter code: MATPSNKNSKSHKRNRRGHIGLNVPNIVLDQTTGEYRVSHRVSPSGVYNGKQVIDKK.

Residues 1-25 (MATPSNKNSKSHKRNRRGHIGLNVP) are disordered. Residues 9-19 (SKSHKRNRRGH) are compositionally biased toward basic residues.

This sequence belongs to the bacterial ribosomal protein bL32 family.

The polypeptide is Large ribosomal subunit protein bL32 (Leuconostoc mesenteroides subsp. mesenteroides (strain ATCC 8293 / DSM 20343 / BCRC 11652 / CCM 1803 / JCM 6124 / NCDO 523 / NBRC 100496 / NCIMB 8023 / NCTC 12954 / NRRL B-1118 / 37Y)).